Reading from the N-terminus, the 525-residue chain is UPF0288 protein MM_0912 (525 aa).

It belongs to the UPF0288 family.

The chain is UPF0288 protein MM_0912 from Methanosarcina mazei (strain ATCC BAA-159 / DSM 3647 / Goe1 / Go1 / JCM 11833 / OCM 88) (Methanosarcina frisia).